Consider the following 234-residue polypeptide: Orotidine 5'-phosphate decarboxylase (234 aa).

Substrate-binding positions include aspartate 10, lysine 31, 58–67, threonine 121, arginine 183, glutamine 192, glycine 212, and arginine 213; that span reads DLKLHDIPNT. Lysine 60 acts as the Proton donor in catalysis.

The protein belongs to the OMP decarboxylase family. Type 1 subfamily. In terms of assembly, homodimer.

The enzyme catalyses orotidine 5'-phosphate + H(+) = UMP + CO2. It participates in pyrimidine metabolism; UMP biosynthesis via de novo pathway; UMP from orotate: step 2/2. Catalyzes the decarboxylation of orotidine 5'-monophosphate (OMP) to uridine 5'-monophosphate (UMP). The sequence is that of Orotidine 5'-phosphate decarboxylase from Lysinibacillus sphaericus (strain C3-41).